We begin with the raw amino-acid sequence, 428 residues long: Adenylosuccinate synthetase (428 aa).

Residues 12–18 (GDEGKGK) and 40–42 (GHT) each bind GTP. Residue Asp13 is the Proton acceptor of the active site. Mg(2+)-binding residues include Asp13 and Gly40. IMP-binding positions include 13–16 (DEGK), 38–41 (NAGH), Thr130, Arg144, Gln225, Thr240, and Arg304. The active-site Proton donor is the His41. 300–306 (VTTGRAR) provides a ligand contact to substrate. GTP contacts are provided by residues Arg306, 332 to 334 (KID), and 414 to 416 (SVG).

It belongs to the adenylosuccinate synthetase family. As to quaternary structure, homodimer. Mg(2+) is required as a cofactor.

The protein localises to the cytoplasm. The catalysed reaction is IMP + L-aspartate + GTP = N(6)-(1,2-dicarboxyethyl)-AMP + GDP + phosphate + 2 H(+). The protein operates within purine metabolism; AMP biosynthesis via de novo pathway; AMP from IMP: step 1/2. In terms of biological role, plays an important role in the de novo pathway of purine nucleotide biosynthesis. Catalyzes the first committed step in the biosynthesis of AMP from IMP. This chain is Adenylosuccinate synthetase, found in Clostridium kluyveri (strain ATCC 8527 / DSM 555 / NBRC 12016 / NCIMB 10680 / K1).